Reading from the N-terminus, the 255-residue chain is Ribonuclease PH (255 aa).

Phosphate-binding positions include R86 and 124–126; that span reads GTR.

Belongs to the RNase PH family. In terms of assembly, homohexameric ring arranged as a trimer of dimers.

It catalyses the reaction tRNA(n+1) + phosphate = tRNA(n) + a ribonucleoside 5'-diphosphate. Phosphorolytic 3'-5' exoribonuclease that plays an important role in tRNA 3'-end maturation. Removes nucleotide residues following the 3'-CCA terminus of tRNAs; can also add nucleotides to the ends of RNA molecules by using nucleoside diphosphates as substrates, but this may not be physiologically important. Probably plays a role in initiation of 16S rRNA degradation (leading to ribosome degradation) during starvation. This chain is Ribonuclease PH, found in Hydrogenobaculum sp. (strain Y04AAS1).